Consider the following 268-residue polypeptide: MFDSIIIGQYVPGDSVVHRLDPRVKLTAVFIFLVFMFMTRDPLLLTVAVLLSFGGLLASRVPLSFYAKGMRFISIIIVLTFVLHLFMTGGGEVIVELPFATIYSGGLIEGFMLAMKLAMIITIASLLTLTTTPIDLTDGMERMLAPFKRVKLPTHELALMMSIALRFIPTLIEETRTIVLAQLARGTNFSEGSLWKRLKALIPILVPLFTQSFKRAEELATAMEARGYAGGEGRTKYRQLHWGLKDSVVLAVFLLFAAAVMAERFMGG.

Transmembrane regions (helical) follow at residues 29 to 49 (VFIF…TVAV), 75 to 95 (IIIV…EVIV), 107 to 127 (LIEG…ASLL), 152 to 172 (LPTH…PTLI), and 242 to 262 (WGLK…AVMA).

It belongs to the energy-coupling factor EcfT family. Forms a stable energy-coupling factor (ECF) transporter complex composed of 2 membrane-embedded substrate-binding proteins (S component), 2 ATP-binding proteins (A component) and 2 transmembrane proteins (T component). May be able to interact with more than 1 S component at a time.

It is found in the cell membrane. Transmembrane (T) component of an energy-coupling factor (ECF) ABC-transporter complex. Unlike classic ABC transporters this ECF transporter provides the energy necessary to transport a number of different substrates. This chain is Energy-coupling factor transporter transmembrane protein EcfT, found in Bacillus selenitireducens (strain ATCC 700615 / DSM 15326 / MLS10).